Consider the following 471-residue polypeptide: tRNA(Ile)-lysidine synthase (471 aa).

35–40 lines the ATP pocket; the sequence is SGGADS.

This sequence belongs to the tRNA(Ile)-lysidine synthase family.

It localises to the cytoplasm. The enzyme catalyses cytidine(34) in tRNA(Ile2) + L-lysine + ATP = lysidine(34) in tRNA(Ile2) + AMP + diphosphate + H(+). Ligates lysine onto the cytidine present at position 34 of the AUA codon-specific tRNA(Ile) that contains the anticodon CAU, in an ATP-dependent manner. Cytidine is converted to lysidine, thus changing the amino acid specificity of the tRNA from methionine to isoleucine. This chain is tRNA(Ile)-lysidine synthase, found in Geobacter sulfurreducens (strain ATCC 51573 / DSM 12127 / PCA).